We begin with the raw amino-acid sequence, 114 residues long: Cuticle protein AMP5 (114 aa).

Position 1 is a pyrrolidone carboxylic acid (Gln1). Positions 18–83 (AGNYFYEFET…VDSPLIPVAP (66 aa)) constitute a Chitin-binding type R&amp;R domain.

Arthrodial membrane.

In Homarus americanus (American lobster), this protein is Cuticle protein AMP5.